The following is a 296-amino-acid chain: Hca operon transcriptional activator HcaR (296 aa).

An HTH lysR-type domain is found at 1–58 (MELRHLRYFVAVAQALNFTRAAEKLHTSQPSLSSQIRDLENCVGVPLLVRDKRKVALT). The H-T-H motif DNA-binding region spans 18 to 38 (FTRAAEKLHTSQPSLSSQIRD).

This sequence belongs to the LysR transcriptional regulatory family.

Transcriptional activator of the hca operon for 3-phenylpropionic acid catabolism. This Escherichia coli (strain K12) protein is Hca operon transcriptional activator HcaR (hcaR).